The chain runs to 383 residues: tRNA-specific 2-thiouridylase MnmA (383 aa).

Residues 10-17 (AMSGGVDS) and M36 each bind ATP. C107 functions as the Nucleophile in the catalytic mechanism. A disulfide bridge connects residues C107 and C206. G131 contacts ATP. An interaction with tRNA region spans residues 155–157 (KDQ). C206 (cysteine persulfide intermediate) is an active-site residue. Residues 315 to 316 (RY) are interaction with tRNA.

Belongs to the MnmA/TRMU family.

It is found in the cytoplasm. The enzyme catalyses S-sulfanyl-L-cysteinyl-[protein] + uridine(34) in tRNA + AH2 + ATP = 2-thiouridine(34) in tRNA + L-cysteinyl-[protein] + A + AMP + diphosphate + H(+). Functionally, catalyzes the 2-thiolation of uridine at the wobble position (U34) of tRNA, leading to the formation of s(2)U34. This chain is tRNA-specific 2-thiouridylase MnmA, found in Salinibacter ruber (strain DSM 13855 / M31).